Here is a 453-residue protein sequence, read N- to C-terminus: Bifunctional protein GlmU (453 aa).

The segment at 1 to 227 is pyrophosphorylase; it reads MNKLSVVILA…LMEVEGVNNR (227 aa). Residues 9-12, K23, Q74, 79-80, 101-103, G138, E152, N167, and N225 each bind UDP-N-acetyl-alpha-D-glucosamine; these read LAAG, GT, and YGD. Residue D103 coordinates Mg(2+). N225 lines the Mg(2+) pocket. Residues 228 to 248 are linker; sequence LQLANLERHYQRKQVEKLLLA. An N-acetyltransferase region spans residues 249–453; it reads GVTFADPARF…ISNWQRPKRK (205 aa). UDP-N-acetyl-alpha-D-glucosamine contacts are provided by R331 and K349. H361 serves as the catalytic Proton acceptor. 2 residues coordinate UDP-N-acetyl-alpha-D-glucosamine: Y364 and N375. Acetyl-CoA contacts are provided by residues A378, 384-385, S403, A421, and R438; that span reads NY.

This sequence in the N-terminal section; belongs to the N-acetylglucosamine-1-phosphate uridyltransferase family. In the C-terminal section; belongs to the transferase hexapeptide repeat family. As to quaternary structure, homotrimer. Requires Mg(2+) as cofactor.

The protein resides in the cytoplasm. It catalyses the reaction alpha-D-glucosamine 1-phosphate + acetyl-CoA = N-acetyl-alpha-D-glucosamine 1-phosphate + CoA + H(+). It carries out the reaction N-acetyl-alpha-D-glucosamine 1-phosphate + UTP + H(+) = UDP-N-acetyl-alpha-D-glucosamine + diphosphate. The protein operates within nucleotide-sugar biosynthesis; UDP-N-acetyl-alpha-D-glucosamine biosynthesis; N-acetyl-alpha-D-glucosamine 1-phosphate from alpha-D-glucosamine 6-phosphate (route II): step 2/2. It participates in nucleotide-sugar biosynthesis; UDP-N-acetyl-alpha-D-glucosamine biosynthesis; UDP-N-acetyl-alpha-D-glucosamine from N-acetyl-alpha-D-glucosamine 1-phosphate: step 1/1. Its pathway is bacterial outer membrane biogenesis; LPS lipid A biosynthesis. Catalyzes the last two sequential reactions in the de novo biosynthetic pathway for UDP-N-acetylglucosamine (UDP-GlcNAc). The C-terminal domain catalyzes the transfer of acetyl group from acetyl coenzyme A to glucosamine-1-phosphate (GlcN-1-P) to produce N-acetylglucosamine-1-phosphate (GlcNAc-1-P), which is converted into UDP-GlcNAc by the transfer of uridine 5-monophosphate (from uridine 5-triphosphate), a reaction catalyzed by the N-terminal domain. The polypeptide is Bifunctional protein GlmU (Histophilus somni (strain 2336) (Haemophilus somnus)).